A 513-amino-acid chain; its full sequence is Glutamate--tRNA ligase 2 (513 aa).

The 'HIGH' region motif lies at 11–21; the sequence is PSPSGFLHIGS. The 'KMSKS' region signature appears at 240 to 244; that stretch reads KLSKR. Position 243 (Lys243) interacts with ATP.

Belongs to the class-I aminoacyl-tRNA synthetase family. Glutamate--tRNA ligase type 1 subfamily. Monomer.

Its subcellular location is the cytoplasm. The enzyme catalyses tRNA(Glu) + L-glutamate + ATP = L-glutamyl-tRNA(Glu) + AMP + diphosphate. Catalyzes the attachment of glutamate to tRNA(Glu) in a two-step reaction: glutamate is first activated by ATP to form Glu-AMP and then transferred to the acceptor end of tRNA(Glu). The protein is Glutamate--tRNA ligase 2 of Rickettsia massiliae (strain Mtu5).